Reading from the N-terminus, the 329-residue chain is Ig gamma-2 chain C region (329 aa).

3 disulfide bridges follow: C28-C79, C142-C202, and C248-C308. An N-linked (GlcNAc...) asparagine glycan is attached at N178.

It localises to the secreted. The chain is Ig gamma-2 chain C region from Cavia porcellus (Guinea pig).